Here is a 781-residue protein sequence, read N- to C-terminus: Zinc finger protein klf1 (781 aa).

2 consecutive C2H2-type zinc fingers follow at residues 17 to 41 (YKCDFQGCTKSFTRKEHARRHFRSH) and 47 to 70 (FICPHCSSSFTRSDVLNRHVNQKH).

It is found in the nucleus. The protein resides in the cytoplasm. Its subcellular location is the cytoskeleton. It localises to the spindle. Its function is as follows. Required for maintaining cell viability in nitrogen-deficient stationary phase (G0) cells. The protein is Zinc finger protein klf1 (klf1) of Schizosaccharomyces pombe (strain 972 / ATCC 24843) (Fission yeast).